Here is a 341-residue protein sequence, read N- to C-terminus: L-threonine 3-dehydrogenase (341 aa).

A Zn(2+)-binding site is contributed by cysteine 38. Residues threonine 40 and histidine 43 each act as charge relay system in the active site. Zn(2+) is bound by residues histidine 63, glutamate 64, cysteine 93, cysteine 96, cysteine 99, and cysteine 107. Residues isoleucine 175, aspartate 195, arginine 200, 262–264, and 286–287 contribute to the NAD(+) site; these read LGI and IY.

It belongs to the zinc-containing alcohol dehydrogenase family. In terms of assembly, homotetramer. The cofactor is Zn(2+).

Its subcellular location is the cytoplasm. It carries out the reaction L-threonine + NAD(+) = (2S)-2-amino-3-oxobutanoate + NADH + H(+). Its pathway is amino-acid degradation; L-threonine degradation via oxydo-reductase pathway; glycine from L-threonine: step 1/2. In terms of biological role, catalyzes the NAD(+)-dependent oxidation of L-threonine to 2-amino-3-ketobutyrate. This chain is L-threonine 3-dehydrogenase, found in Shewanella halifaxensis (strain HAW-EB4).